The sequence spans 338 residues: UDP-3-O-acylglucosamine N-acyltransferase (338 aa).

The Proton acceptor role is filled by H239.

This sequence belongs to the transferase hexapeptide repeat family. LpxD subfamily. As to quaternary structure, homotrimer.

It catalyses the reaction a UDP-3-O-[(3R)-3-hydroxyacyl]-alpha-D-glucosamine + a (3R)-hydroxyacyl-[ACP] = a UDP-2-N,3-O-bis[(3R)-3-hydroxyacyl]-alpha-D-glucosamine + holo-[ACP] + H(+). The protein operates within bacterial outer membrane biogenesis; LPS lipid A biosynthesis. In terms of biological role, catalyzes the N-acylation of UDP-3-O-acylglucosamine using 3-hydroxyacyl-ACP as the acyl donor. Is involved in the biosynthesis of lipid A, a phosphorylated glycolipid that anchors the lipopolysaccharide to the outer membrane of the cell. In Thermosynechococcus vestitus (strain NIES-2133 / IAM M-273 / BP-1), this protein is UDP-3-O-acylglucosamine N-acyltransferase.